A 169-amino-acid chain; its full sequence is MKKWMLAICLMFINEICHATDCFDLAGRDYKIDPDLLRAISWKESRYRVNAIGINPVTGYGSGLMQVDSQHFNELARYGIKPEHLTTDPCMNIYTGAYYLAIAFKKWGVSWEAVGAYNAGFRKTERQNQRRLAYASDVYRIYTGIKSSKGIRIPATKKSLPEINSVQNN.

Belongs to the IagB/IpgF/P19 family.

The sequence is that of X polypeptide (yubQ) from Escherichia coli (strain K12).